Consider the following 397-residue polypeptide: LIM/homeobox protein Lhx9 (397 aa).

The interval 40–60 is disordered; that stretch reads RSKTESRLAKGGQMNGRETNM. LIM zinc-binding domains are found at residues 69 to 130 and 131 to 193; these read ALCA…RFSV and QRCA…LLQG. Residues 267-326 constitute a DNA-binding region (homeobox); sequence TKRMATSFKHHQLRTMKSYFAINHNPDAKDLKQLAQKTGLTKRVLQVWFQNARAKFRRNL. Disordered stretches follow at residues 330–363 and 378–397; these read ENGG…TTLT and SNLD…TNLF. Residues 353–363 are compositionally biased toward low complexity; it reads LTPPGTATTLT. Over residues 387-397 the composition is skewed to polar residues; it reads SPSQTTLTNLF.

The protein resides in the nucleus. May be involved in gonadal development. The protein is LIM/homeobox protein Lhx9 (LHX9) of Gallus gallus (Chicken).